The chain runs to 163 residues: Putative ribose 5-phosphate isomerase (163 aa).

16-17 (DD) is a D-ribulose 5-phosphate binding site. The active-site Proton acceptor is the cysteine 76. D-ribulose 5-phosphate is bound by residues 77 to 81 (GTGLG), asparagine 110, arginine 120, and lysine 148.

The protein belongs to the LacAB/RpiB family. As to quaternary structure, homodimer or homotetramer.

The chain is Putative ribose 5-phosphate isomerase from Coccidioides immitis (strain RS) (Valley fever fungus).